We begin with the raw amino-acid sequence, 340 residues long: Glycerol-3-phosphate dehydrogenase [NAD(P)+] (340 aa).

The NADPH site is built by Ser13, Trp14, and Lys108. Residues Lys108, Gly139, and Ser141 each contribute to the sn-glycerol 3-phosphate site. An NADPH-binding site is contributed by Ala143. Lys194, Asp247, Ser257, Arg258, and Asn259 together coordinate sn-glycerol 3-phosphate. The active-site Proton acceptor is the Lys194. Arg258 contributes to the NADPH binding site. Residues Val282 and Glu284 each contribute to the NADPH site.

It belongs to the NAD-dependent glycerol-3-phosphate dehydrogenase family.

Its subcellular location is the cytoplasm. The catalysed reaction is sn-glycerol 3-phosphate + NAD(+) = dihydroxyacetone phosphate + NADH + H(+). The enzyme catalyses sn-glycerol 3-phosphate + NADP(+) = dihydroxyacetone phosphate + NADPH + H(+). Its pathway is membrane lipid metabolism; glycerophospholipid metabolism. Catalyzes the reduction of the glycolytic intermediate dihydroxyacetone phosphate (DHAP) to sn-glycerol 3-phosphate (G3P), the key precursor for phospholipid synthesis. In Streptococcus thermophilus (strain ATCC BAA-491 / LMD-9), this protein is Glycerol-3-phosphate dehydrogenase [NAD(P)+].